A 651-amino-acid polypeptide reads, in one-letter code: MAVRQIKDGEYTATIYRLIKEARYGEAIQVLSNELQKQYRSRAGLSLLGYCYYQIQDFVNAADCYEQLIQISPEVEEYKLYYAQSLYKACMYPEAMKATFALDNAAYQSKMLKLQASVKYGEEDISGAKSLVEQMPSEDPESEINMGCLLYKEGHYEEACKKFITAMQVMGYKQDLSFNIALCYYSMKQYAPALKHIADIIERGIREHPELGVGMTTEGIEVRSVGNTLVLHETALIEAFNLKAAIEYQLKNYEAAQEALTDMPPRSEEELDPVTLHNQALMNMDTKPTEGFEKLQFLLQQNPFPPETFGNLLLLYSKYEYFDLAADVLAENAHLTYKFLTPYLYDFLDAMITCQTAPEEAFLKLDELAGMLTEQMRKLTKQVQEARHNRDDEAVKKAVNEYDETLEKYIPVLMAQAKIYWNMENYQMVEKIFRKSVEFCNEHDIWKLNVAHVLFMQDNKYKEAIGFYEPIVKKHYDNILNVSAAVLANLCVSYIMTSQNEEAEELMRKIEKEEEQIAYENPDKKIYHLCIVNLVIGTLYCAKGNYEFGISRVIKSLEPYNKKLGTDTWYHAKRCFLSLLENMSKHMIMLRDDVIVECIQFLEHCEIYGRNILAVIEQPLEEERMHIGKNTVTYESRQLKALLYEITSWNL.

TPR repeat units follow at residues 8–41, 42–75, 140–173, 175–207, 372–405, 410–443, and 445–478; these read DGEYTATIYRLIKEARYGEAIQVLSNELQKQYRS, RAGLSLLGYCYYQIQDFVNAADCYEQLIQISPEV, PESEINMGCLLYKEGHYEEACKKFITAMQVMGYK, DLSFNIALCYYSMKQYAPALKHIADIIERGIRE, LTEQMRKLTKQVQEARHNRDDEAVKKAVNEYDET, IPVLMAQAKIYWNMENYQMVEKIFRKSVEFCNEH, and IWKLNVAHVLFMQDNKYKEAIGFYEPIVKKHYDN. Residues 494 to 521 adopt a coiled-coil conformation; it reads YIMTSQNEEAEELMRKIEKEEEQIAYEN. One copy of the TPR 8 repeat lies at 530-563; it reads CIVNLVIGTLYCAKGNYEFGISRVIKSLEPYNKK.

This sequence belongs to the TTC30/dfy-1/fleer family.

It localises to the cell projection. It is found in the cilium. Required for polyglutamylation of axonemal tubulin. Plays a role in anterograde intraflagellar transport (IFT), the process by which cilia precursors are transported from the base of the cilium to the site of their incorporation at the tip. This chain is Intraflagellar transport protein 70A (ift70a), found in Xenopus laevis (African clawed frog).